The chain runs to 302 residues: Beta-1,2-mannobiose phosphorylase (302 aa).

Belongs to the glycosyl hydrolase 130 family. Monomer.

The enzyme catalyses beta-D-mannopyranosyl-(1-&gt;2)-D-mannopyranose + phosphate = alpha-D-mannose 1-phosphate + D-mannose. Its pathway is nucleotide-sugar biosynthesis; GDP-alpha-D-mannose biosynthesis. Functionally, probably involved in a salvage pathway for GDP-D-mannose biosynthesis. Catalyzes the reversible phosphorolysis of 1,2-beta-oligomannan. In phosphorolytic reactions, prefers beta-1,2-mannobiose (beta-1,2-Man2) as substrate. Produces alpha-D-mannose 1-phosphate, which is the precursor of GDP-D-mannose. The chain is Beta-1,2-mannobiose phosphorylase from Thermoanaerobacter sp. (strain X514).